The sequence spans 489 residues: WD repeat-containing protein JIP5 (489 aa).

The stretch at 4–45 is one WD 1 repeat; the sequence is PLSSDALDLCFHPAAETNLLAVGLISGKIQLINYDDYLSSPS. A disordered region spans residues 46–66; it reads SSRTPLAPPSKKSKPSTISSA. A WD 2 repeat occupies 124–163; sequence EVHDAAPSRVLPVDESLVVTGDDDGVVRLWDVRKGGGKGI. Positions 192 to 246 are disordered; that stretch reads SIKEAKKSKTQLKKQRRRARQAERLKEHDKEKREQNASDTEASEPDSEDDAAIKV. A compositionally biased stretch (basic residues) spans 199–210; sequence SKTQLKKQRRRA. Basic and acidic residues predominate over residues 211-227; it reads RQAERLKEHDKEKREQN. The segment covering 232–241 has biased composition (acidic residues); it reads EASEPDSEDD. 2 WD repeats span residues 279-318 and 323-363; these read DQEDELLSITSIRSSTKLVVGTQLGILSLWTPSRGLLDHV and GHPA…GVIA. The interval 417-489 is disordered; it reads IVGLAEDDSD…AGKGGFFSDL (73 aa). Composition is skewed to acidic residues over residues 421–440 and 449–472; these read AEDDSDDDDDDDDDDDDDDD and DGAEQTDGDAESGQDDEQDPDSED.

This sequence belongs to the WD repeat WDR55 family.

It localises to the nucleus. The protein localises to the nucleolus. The chain is WD repeat-containing protein JIP5 (JIP5) from Mycosarcoma maydis (Corn smut fungus).